Reading from the N-terminus, the 86-residue chain is ATP synthase subunit c (86 aa).

Helical transmembrane passes span 8 to 28 and 66 to 86; these read VLAASAIGAGLAMIAGIGAGI and GIYALVIALLLLFANPLIGML.

This sequence belongs to the ATPase C chain family. As to quaternary structure, F-type ATPases have 2 components, F(1) - the catalytic core - and F(0) - the membrane proton channel. F(1) has five subunits: alpha(3), beta(3), gamma(1), delta(1), epsilon(1). F(0) has three main subunits: a(1), b(2) and c(10-14). The alpha and beta chains form an alternating ring which encloses part of the gamma chain. F(1) is attached to F(0) by a central stalk formed by the gamma and epsilon chains, while a peripheral stalk is formed by the delta and b chains.

The protein localises to the cell membrane. Functionally, f(1)F(0) ATP synthase produces ATP from ADP in the presence of a proton or sodium gradient. F-type ATPases consist of two structural domains, F(1) containing the extramembraneous catalytic core and F(0) containing the membrane proton channel, linked together by a central stalk and a peripheral stalk. During catalysis, ATP synthesis in the catalytic domain of F(1) is coupled via a rotary mechanism of the central stalk subunits to proton translocation. Key component of the F(0) channel; it plays a direct role in translocation across the membrane. A homomeric c-ring of between 10-14 subunits forms the central stalk rotor element with the F(1) delta and epsilon subunits. The sequence is that of ATP synthase subunit c from Natranaerobius thermophilus (strain ATCC BAA-1301 / DSM 18059 / JW/NM-WN-LF).